We begin with the raw amino-acid sequence, 445 residues long: Fibrinogen gamma chain (445 aa).

Residues 1-25 form the signal peptide; that stretch reads MNWSLQLRSFILCWALLLLSPTGLA. Residue Asn-78 is glycosylated (N-linked (GlcNAc...) asparagine). A Fibrinogen C-terminal domain is found at 170 to 416; the sequence is RIHDTTGKDC…ETTMKIIPFN (247 aa). An intrachain disulfide couples Cys-179 to Cys-208. Ca(2+) contacts are provided by Asp-344, Asp-346, and Gly-350. The cysteines at positions 352 and 365 are disulfide-linked. The interval 400–422 is gamma-chain polymerization, binding amino end of another fibrin alpha chain; it reads TRWYSMKETTMKIIPFNRLSIGD. Gln-424 participates in a covalent cross-link: Isoglutamyl lysine isopeptide (Gln-Lys) (interchain with K-432). The segment at 424–445 is disordered; it reads QQHHMGGSKQVSVEHEVDVEYP. Residue Ser-431 is modified to Phosphoserine. Lys-432 participates in a covalent cross-link: Isoglutamyl lysine isopeptide (Lys-Gln) (interchain with Q-424). A compositionally biased stretch (basic and acidic residues) spans 435–445; that stretch reads SVEHEVDVEYP.

In terms of assembly, heterohexamer; disulfide linked. Contains 2 sets of 3 non-identical chains (alpha, beta and gamma). The 2 heterotrimers are in head to head conformation with the N-termini in a small central domain. Post-translationally, conversion of fibrinogen to fibrin is triggered by thrombin, which cleaves fibrinopeptides A and B from alpha and beta chains, and thus exposes the N-terminal polymerization sites responsible for the formation of the soft clot. The soft clot is converted into the hard clot by factor XIIIA which catalyzes the epsilon-(gamma-glutamyl)lysine cross-linking between gamma chains (stronger) and between alpha chains (weaker) of different monomers.

The protein localises to the secreted. Functionally, together with fibrinogen alpha (FGA) and fibrinogen beta (FGB), polymerizes to form an insoluble fibrin matrix. Has a major function in hemostasis as one of the primary components of blood clots. In addition, functions during the early stages of wound repair to stabilize the lesion and guide cell migration during re-epithelialization. Was originally thought to be essential for platelet aggregation, based on in vitro studies using anticoagulated blood. However, subsequent studies have shown that it is not absolutely required for thrombus formation in vivo. Enhances expression of SELP in activated platelets via an ITGB3-dependent pathway. Maternal fibrinogen is essential for successful pregnancy. Fibrin deposition is also associated with infection, where it protects against IFNG-mediated hemorrhage. May also facilitate the antibacterial immune response via both innate and T-cell mediated pathways. The protein is Fibrinogen gamma chain (Fgg) of Rattus norvegicus (Rat).